Reading from the N-terminus, the 297-residue chain is Cyclin-dependent kinase 1 (297 aa).

Met1 is modified (N-acetylmethionine). A Phosphotyrosine; by PKR modification is found at Tyr4. The 284-residue stretch at 4-287 (YTKIEKIGEG…GKMALNHPYF (284 aa)) folds into the Protein kinase domain. Lys6 and Lys9 each carry N6-acetyllysine; alternate. Glycyl lysine isopeptide (Lys-Gly) (interchain with G-Cter in SUMO2); alternate cross-links involve residues Lys6 and Lys9. Position 10–18 (10–18 (IGEGTYGVV)) interacts with ATP. Thr14 carries the post-translational modification Phosphothreonine; by PKMYT1. A Phosphotyrosine; by PKMYT1, WEE1 and WEE2 modification is found at Tyr15. The residue at position 15 (Tyr15) is a Phosphotyrosine; by WEE1 and WEE2. A Phosphotyrosine modification is found at Tyr19. A Glycyl lysine isopeptide (Lys-Gly) (interchain with G-Cter in SUMO2) cross-link involves residue Lys20. Lys33 provides a ligand contact to ATP. Ser39 is subject to Phosphoserine. A Phosphotyrosine modification is found at Tyr77. Asp128 acts as the Proton acceptor in catalysis. Lys139 participates in a covalent cross-link: Glycyl lysine isopeptide (Lys-Gly) (interchain with G-Cter in SUMO2). Thr141 is subject to Phosphothreonine. A Phosphothreonine; by CAK modification is found at Thr161. Ser178 is modified (phosphoserine). Residue Thr222 is modified to Phosphothreonine. At Lys245 the chain carries N6-succinyllysine. Ser248 bears the Phosphoserine mark.

The protein belongs to the protein kinase superfamily. CMGC Ser/Thr protein kinase family. CDC2/CDKX subfamily. In terms of assembly, forms a stable but non-covalent complex with a regulatory subunit and with a cyclin. Interacts with cyclins-B (CCNB1, CCNB2 and CCNB3) to form a serine/threonine kinase holoenzyme complex also known as maturation promoting factor (MPF). The cyclin subunit imparts substrate specificity to the complex. Can also form CDK1-cylin-D and CDK1-cyclin-E complexes that phosphorylate RB1 in vitro. Binds to RB1 and other transcription factors such as FOXO1 and RUNX2. Promotes G2-M transition when in complex with a cyclin-B. Interacts with DLGAP5. Binds to the CDK inhibitors CDKN1A/p21 and CDKN1B/p27. Isoform 2 is unable to complex with cyclin-B1 and also fails to bind to CDKN1A/p21. Interacts with catalytically active CCNB1 and RALBP1 during mitosis to form an endocytotic complex during interphase. Associates with cyclins-A and B1 during S-phase in regenerating hepatocytes. Interacts with FANCC. Interacts with CEP63; this interaction recruits CDK1 to centrosomes. Interacts with CENPA. Interacts with NR1D1. Interacts with proteasome subunit PSMA8; to participate in meiosis progression during spermatogenesis. Phosphorylation at Thr-161 by CAK/CDK7 activates kinase activity. Phosphorylation at Thr-14 and Tyr-15 by PKMYT1 prevents nuclear translocation. Phosphorylation at Tyr-15 by WEE1 and WEE2 inhibits the protein kinase activity and acts as a negative regulator of entry into mitosis (G2 to M transition). Phosphorylation by PKMYT1 and WEE1 takes place during mitosis to keep CDK1-cyclin-B complexes inactive until the end of G2. By the end of G2, PKMYT1 and WEE1 are inactivated, but CDC25A and CDC25B are activated. Dephosphorylation by active CDC25A and CDC25B at Thr-14 and Tyr-15, leads to CDK1 activation at the G2-M transition. Phosphorylation at Tyr-15 by WEE2 during oogenesis is required to maintain meiotic arrest in oocytes during the germinal vesicle (GV) stage, a long period of quiescence at dictyate prophase I, leading to prevent meiotic reentry. Phosphorylation by WEE2 is also required for metaphase II exit during egg activation to ensure exit from meiosis in oocytes and promote pronuclear formation. Phosphorylated at Tyr-4 by PKR/EIF2AK2 upon genotoxic stress. This phosphorylation triggers CDK1 polyubiquitination and subsequent proteolysis, thus leading to G2 arrest. Post-translationally, polyubiquitinated upon genotoxic stress.

The protein resides in the nucleus. The protein localises to the cytoplasm. Its subcellular location is the mitochondrion. It is found in the cytoskeleton. It localises to the microtubule organizing center. The protein resides in the centrosome. The protein localises to the spindle. The enzyme catalyses L-seryl-[protein] + ATP = O-phospho-L-seryl-[protein] + ADP + H(+). It catalyses the reaction L-threonyl-[protein] + ATP = O-phospho-L-threonyl-[protein] + ADP + H(+). It carries out the reaction [DNA-directed RNA polymerase] + ATP = phospho-[DNA-directed RNA polymerase] + ADP + H(+). Phosphorylation at Thr-14 or Tyr-15 inactivates the enzyme, while phosphorylation at Thr-161 activates it. Activated through a multistep process; binding to cyclin-B is required for relocation of cyclin-kinase complexes to the nucleus, activated by CAK/CDK7-mediated phosphorylation on Thr-161, and CDC25-mediated dephosphorylation of inhibitory phosphorylation on Thr-14 and Tyr-15. Activity is restricted during S-phase in an ATR-dependent manner to prevent premature entry into G2. Repressed by the CDK inhibitors CDKN1A/p21 and CDKN1B/p27 during the G1 phase and by CDKN1A/p21 at the G1-S checkpoint upon DNA damage. Transient activation by rapid and transient dephosphorylation at Tyr-15 triggered by TGFB1. Its function is as follows. Plays a key role in the control of the eukaryotic cell cycle by modulating the centrosome cycle as well as mitotic onset; promotes G2-M transition via association with multiple interphase cyclins. Phosphorylates PARVA/actopaxin, APC, AMPH, APC, BARD1, Bcl-xL/BCL2L1, BRCA2, CALD1, CASP8, CDC7, CDC20, CDC25A, CDC25C, CC2D1A, CENPA, CSNK2 proteins/CKII, FZR1/CDH1, CDK7, CEBPB, CHAMP1, DMD/dystrophin, EEF1 proteins/EF-1, EZH2, KIF11/EG5, EGFR, FANCG, FOS, GFAP, GOLGA2/GM130, GRASP1, UBE2A/hHR6A, HIST1H1 proteins/histone H1, HMGA1, HIVEP3/KRC, KAT5, LMNA, LMNB, LBR, LATS1, MAP1B, MAP4, MARCKS, MCM2, MCM4, MKLP1, MLST8, MYB, NEFH, NFIC, NPC/nuclear pore complex, PITPNM1/NIR2, NPM1, NCL, NUCKS1, NPM1/numatrin, ORC1, PRKAR2A, EEF1E1/p18, EIF3F/p47, p53/TP53, NONO/p54NRB, PAPOLA, PLEC/plectin, RB1, TPPP, UL40/R2, RAB4A, RAP1GAP, RBBP8/CtIP, RCC1, RPS6KB1/S6K1, KHDRBS1/SAM68, ESPL1, SKI, BIRC5/survivin, STIP1, TEX14, beta-tubulins, MAPT/TAU, NEDD1, VIM/vimentin, TK1, FOXO1, RUNX1/AML1, SAMHD1, SIRT2, CGAS and RUNX2. CDK1/CDC2-cyclin-B controls pronuclear union in interphase fertilized eggs. Essential for early stages of embryonic development. During G2 and early mitosis, CDC25A/B/C-mediated dephosphorylation activates CDK1/cyclin complexes which phosphorylate several substrates that trigger at least centrosome separation, Golgi dynamics, nuclear envelope breakdown and chromosome condensation. Once chromosomes are condensed and aligned at the metaphase plate, CDK1 activity is switched off by WEE1- and PKMYT1-mediated phosphorylation to allow sister chromatid separation, chromosome decondensation, reformation of the nuclear envelope and cytokinesis. Phosphorylates KRT5 during prometaphase and metaphase. Inactivated by PKR/EIF2AK2- and WEE1-mediated phosphorylation upon DNA damage to stop cell cycle and genome replication at the G2 checkpoint thus facilitating DNA repair. Reactivated after successful DNA repair through WIP1-dependent signaling leading to CDC25A/B/C-mediated dephosphorylation and restoring cell cycle progression. Catalyzes lamin (LMNA, LMNB1 and LMNB2) phosphorylation at the onset of mitosis, promoting nuclear envelope breakdown. In proliferating cells, CDK1-mediated FOXO1 phosphorylation at the G2-M phase represses FOXO1 interaction with 14-3-3 proteins and thereby promotes FOXO1 nuclear accumulation and transcription factor activity, leading to cell death of postmitotic neurons. The phosphorylation of beta-tubulins regulates microtubule dynamics during mitosis. NEDD1 phosphorylation promotes PLK1-mediated NEDD1 phosphorylation and subsequent targeting of the gamma-tubulin ring complex (gTuRC) to the centrosome, an important step for spindle formation. In addition, CC2D1A phosphorylation regulates CC2D1A spindle pole localization and association with SCC1/RAD21 and centriole cohesion during mitosis. The phosphorylation of Bcl-xL/BCL2L1 after prolongated G2 arrest upon DNA damage triggers apoptosis. In contrast, CASP8 phosphorylation during mitosis prevents its activation by proteolysis and subsequent apoptosis. This phosphorylation occurs in cancer cell lines, as well as in primary breast tissues and lymphocytes. EZH2 phosphorylation promotes H3K27me3 maintenance and epigenetic gene silencing. CALD1 phosphorylation promotes Schwann cell migration during peripheral nerve regeneration. CDK1-cyclin-B complex phosphorylates NCKAP5L and mediates its dissociation from centrosomes during mitosis. Regulates the amplitude of the cyclic expression of the core clock gene BMAL1 by phosphorylating its transcriptional repressor NR1D1, and this phosphorylation is necessary for SCF(FBXW7)-mediated ubiquitination and proteasomal degradation of NR1D1. Phosphorylates EML3 at 'Thr-881' which is essential for its interaction with HAUS augmin-like complex and TUBG1. Phosphorylates CGAS during mitosis, leading to its inhibition, thereby preventing CGAS activation by self DNA during mitosis. Phosphorylates SKA3 during mitosis which promotes SKA3 binding to the NDC80 complex and anchoring of the SKA complex to kinetochores, to enable stable attachment of mitotic spindle microtubules to kinetochores. The chain is Cyclin-dependent kinase 1 (CDK1) from Pongo abelii (Sumatran orangutan).